A 113-amino-acid chain; its full sequence is uncharacterized protein (113 aa).

The first 16 residues, 1–16, serve as a signal peptide directing secretion; the sequence is MKCLVVLTALFGISTA. Over residues 81 to 101 the composition is skewed to gly residues; that stretch reads GGNGGNGGGGNGGNNGNGNGN. Positions 81-103 are disordered; the sequence is GGNGGNGGGGNGGNNGNGNGNNG.

In terms of tissue distribution, nacreous layer of shell (at protein level).

The protein localises to the secreted. This is an uncharacterized protein from Margaritifera margaritifera (Freshwater pearl mussel).